The chain runs to 230 residues: Orotidine 5'-phosphate decarboxylase (230 aa).

Residues Asp10, Lys32, Asp59–Thr68, Thr119, Arg180, Gln189, Gly209, and Arg210 contribute to the substrate site. Lys61 functions as the Proton donor in the catalytic mechanism.

Belongs to the OMP decarboxylase family. Type 1 subfamily. As to quaternary structure, homodimer.

The catalysed reaction is orotidine 5'-phosphate + H(+) = UMP + CO2. It participates in pyrimidine metabolism; UMP biosynthesis via de novo pathway; UMP from orotate: step 2/2. Catalyzes the decarboxylation of orotidine 5'-monophosphate (OMP) to uridine 5'-monophosphate (UMP). The sequence is that of Orotidine 5'-phosphate decarboxylase from Haemophilus influenzae (strain ATCC 51907 / DSM 11121 / KW20 / Rd).